The primary structure comprises 256 residues: Bialaphos biosynthetic pathway regulatory protein (256 aa).

An HTH luxR-type domain is found at 184 to 249 (ETADAIDVSD…QLGARAAECR (66 aa)). A DNA-binding region (H-T-H motif) is located at residues 208–227 (DVAMARSLGISTRTLRRVIT).

Its function is as follows. Involved in the regulation of the biosynthesis of phosphinothricin tripeptide (PTT), also known as bialaphos (BA), a natural-product antibiotic and potent herbicide. The protein is Bialaphos biosynthetic pathway regulatory protein (brpA) of Streptomyces hygroscopicus.